A 210-amino-acid polypeptide reads, in one-letter code: Ribosomal RNA large subunit methyltransferase E (210 aa).

5 residues coordinate S-adenosyl-L-methionine: Gly-64, Trp-66, Asp-84, Asn-100, and Asp-125. Lys-165 acts as the Proton acceptor in catalysis.

Belongs to the class I-like SAM-binding methyltransferase superfamily. RNA methyltransferase RlmE family.

It localises to the cytoplasm. The enzyme catalyses uridine(2552) in 23S rRNA + S-adenosyl-L-methionine = 2'-O-methyluridine(2552) in 23S rRNA + S-adenosyl-L-homocysteine + H(+). Its function is as follows. Specifically methylates the uridine in position 2552 of 23S rRNA at the 2'-O position of the ribose in the fully assembled 50S ribosomal subunit. The chain is Ribosomal RNA large subunit methyltransferase E from Buchnera aphidicola subsp. Baizongia pistaciae (strain Bp).